Here is a 290-residue protein sequence, read N- to C-terminus: Shikimate dehydrogenase (NADP(+)) (290 aa).

Shikimate-binding positions include 22-24 (SLS) and threonine 68. Catalysis depends on lysine 72, which acts as the Proton acceptor. Position 84 (aspartate 84) interacts with NADP(+). Asparagine 93 and aspartate 108 together coordinate shikimate. Residues 133 to 137 (GSGGS) and isoleucine 228 each bind NADP(+). Tyrosine 230 provides a ligand contact to shikimate. Position 251 (glycine 251) interacts with NADP(+).

This sequence belongs to the shikimate dehydrogenase family. In terms of assembly, homodimer.

It carries out the reaction shikimate + NADP(+) = 3-dehydroshikimate + NADPH + H(+). It participates in metabolic intermediate biosynthesis; chorismate biosynthesis; chorismate from D-erythrose 4-phosphate and phosphoenolpyruvate: step 4/7. In terms of biological role, involved in the biosynthesis of the chorismate, which leads to the biosynthesis of aromatic amino acids. Catalyzes the reversible NADPH linked reduction of 3-dehydroshikimate (DHSA) to yield shikimate (SA). The polypeptide is Shikimate dehydrogenase (NADP(+)) (Leptospira interrogans serogroup Icterohaemorrhagiae serovar Lai (strain 56601)).